We begin with the raw amino-acid sequence, 600 residues long: ATP-dependent lipid A-core flippase (600 aa).

The next 4 membrane-spanning stretches (helical) occupy residues 26 to 46 (VGIF…QPML), 82 to 102 (LLIV…NYFL), 167 to 187 (VFLF…MLAI), and 266 to 286 (PMLQ…VLFL). Positions 30 to 321 (LLSIIGFVIF…LSEVSSTIQK (292 aa)) constitute an ABC transmembrane type-1 domain. The region spanning 353-589 (LEVKNLSFFY…NGYYARLHAM (237 aa)) is the ABC transporter domain. 387-394 (GRSGSGKS) lines the ATP pocket.

The protein belongs to the ABC transporter superfamily. Lipid exporter (TC 3.A.1.106) family. In terms of assembly, homodimer.

The protein resides in the cell inner membrane. It catalyses the reaction ATP + H2O + lipid A-core oligosaccharideSide 1 = ADP + phosphate + lipid A-core oligosaccharideSide 2.. In terms of biological role, involved in lipopolysaccharide (LPS) biosynthesis. Translocates lipid A-core from the inner to the outer leaflet of the inner membrane. Transmembrane domains (TMD) form a pore in the inner membrane and the ATP-binding domain (NBD) is responsible for energy generation. In Pseudomonas savastanoi pv. phaseolicola (strain 1448A / Race 6) (Pseudomonas syringae pv. phaseolicola (strain 1448A / Race 6)), this protein is ATP-dependent lipid A-core flippase.